A 206-amino-acid chain; its full sequence is Holliday junction branch migration complex subunit RuvA (206 aa).

Positions 1–64 are domain I; it reads MIGRLHGIII…EDAQLLYGFN (64 aa). The segment at 65 to 143 is domain II; the sequence is TRQERTLFRE…GWISHDLFTP (79 aa). Residues 144 to 157 are flexible linker; that stretch reads YTDAAPVDHEPSLA. Residues 158-206 are domain III; it reads PADTVESEAVAALLALGYKPQQASLVVSKVIKPEMTVENVIREALRSML.

It belongs to the RuvA family. In terms of assembly, homotetramer. Forms an RuvA(8)-RuvB(12)-Holliday junction (HJ) complex. HJ DNA is sandwiched between 2 RuvA tetramers; dsDNA enters through RuvA and exits via RuvB. An RuvB hexamer assembles on each DNA strand where it exits the tetramer. Each RuvB hexamer is contacted by two RuvA subunits (via domain III) on 2 adjacent RuvB subunits; this complex drives branch migration. In the full resolvosome a probable DNA-RuvA(4)-RuvB(12)-RuvC(2) complex forms which resolves the HJ.

The protein resides in the cytoplasm. The RuvA-RuvB-RuvC complex processes Holliday junction (HJ) DNA during genetic recombination and DNA repair, while the RuvA-RuvB complex plays an important role in the rescue of blocked DNA replication forks via replication fork reversal (RFR). RuvA specifically binds to HJ cruciform DNA, conferring on it an open structure. The RuvB hexamer acts as an ATP-dependent pump, pulling dsDNA into and through the RuvAB complex. HJ branch migration allows RuvC to scan DNA until it finds its consensus sequence, where it cleaves and resolves the cruciform DNA. This is Holliday junction branch migration complex subunit RuvA from Tolumonas auensis (strain DSM 9187 / NBRC 110442 / TA 4).